A 264-amino-acid polypeptide reads, in one-letter code: Acyl-[acyl-carrier-protein]--UDP-N-acetylglucosamine O-acyltransferase (264 aa).

This sequence belongs to the transferase hexapeptide repeat family. LpxA subfamily. As to quaternary structure, homotrimer.

It is found in the cytoplasm. It carries out the reaction a (3R)-hydroxyacyl-[ACP] + UDP-N-acetyl-alpha-D-glucosamine = a UDP-3-O-[(3R)-3-hydroxyacyl]-N-acetyl-alpha-D-glucosamine + holo-[ACP]. It participates in glycolipid biosynthesis; lipid IV(A) biosynthesis; lipid IV(A) from (3R)-3-hydroxytetradecanoyl-[acyl-carrier-protein] and UDP-N-acetyl-alpha-D-glucosamine: step 1/6. Functionally, involved in the biosynthesis of lipid A, a phosphorylated glycolipid that anchors the lipopolysaccharide to the outer membrane of the cell. This Chlorobium phaeobacteroides (strain DSM 266 / SMG 266 / 2430) protein is Acyl-[acyl-carrier-protein]--UDP-N-acetylglucosamine O-acyltransferase.